The following is a 184-amino-acid chain: Ribosome-recycling factor (184 aa).

Belongs to the RRF family.

It localises to the cytoplasm. Functionally, responsible for the release of ribosomes from messenger RNA at the termination of protein biosynthesis. May increase the efficiency of translation by recycling ribosomes from one round of translation to another. The chain is Ribosome-recycling factor from Aster yellows witches'-broom phytoplasma (strain AYWB).